Here is a 363-residue protein sequence, read N- to C-terminus: Phosphoserine aminotransferase (363 aa).

R42 is an L-glutamate binding site. Pyridoxal 5'-phosphate is bound by residues 76-77, W102, T156, D175, and Q198; that span reads GR. Residue K199 is modified to N6-(pyridoxal phosphate)lysine. 240–241 contacts pyridoxal 5'-phosphate; that stretch reads NT.

This sequence belongs to the class-V pyridoxal-phosphate-dependent aminotransferase family. SerC subfamily. In terms of assembly, homodimer. Requires pyridoxal 5'-phosphate as cofactor.

It localises to the cytoplasm. The enzyme catalyses O-phospho-L-serine + 2-oxoglutarate = 3-phosphooxypyruvate + L-glutamate. It carries out the reaction 4-(phosphooxy)-L-threonine + 2-oxoglutarate = (R)-3-hydroxy-2-oxo-4-phosphooxybutanoate + L-glutamate. It participates in amino-acid biosynthesis; L-serine biosynthesis; L-serine from 3-phospho-D-glycerate: step 2/3. It functions in the pathway cofactor biosynthesis; pyridoxine 5'-phosphate biosynthesis; pyridoxine 5'-phosphate from D-erythrose 4-phosphate: step 3/5. Functionally, catalyzes the reversible conversion of 3-phosphohydroxypyruvate to phosphoserine and of 3-hydroxy-2-oxo-4-phosphonooxybutanoate to phosphohydroxythreonine. This chain is Phosphoserine aminotransferase, found in Shewanella sp. (strain MR-4).